Reading from the N-terminus, the 429-residue chain is Probable M18 family aminopeptidase 2 (429 aa).

Zn(2+) contacts are provided by His-82, His-156, and His-401.

The protein belongs to the peptidase M18 family. Zn(2+) serves as cofactor.

The protein is Probable M18 family aminopeptidase 2 of Pseudomonas syringae pv. syringae (strain B728a).